The chain runs to 354 residues: Holliday junction branch migration complex subunit RuvB (354 aa).

Residues 1–183 (MTGDNLVSAY…FGFVAHLDFY (183 aa)) are large ATPase domain (RuvB-L). ATP is bound by residues arginine 23, glycine 64, lysine 67, threonine 68, serine 69, 130-132 (EDF), arginine 173, tyrosine 183, and arginine 220. Threonine 68 serves as a coordination point for Mg(2+). Positions 184–254 (SPADLETLLH…AARAALLVYD (71 aa)) are small ATPAse domain (RuvB-S). The tract at residues 257–354 (ALGLDRLDRQ…DLFSVEPDQP (98 aa)) is head domain (RuvB-H). DNA-binding residues include arginine 312 and arginine 317. The segment at 330-354 (TPPNGIFGSDAPPASDLFSVEPDQP) is disordered.

This sequence belongs to the RuvB family. Homohexamer. Forms an RuvA(8)-RuvB(12)-Holliday junction (HJ) complex. HJ DNA is sandwiched between 2 RuvA tetramers; dsDNA enters through RuvA and exits via RuvB. An RuvB hexamer assembles on each DNA strand where it exits the tetramer. Each RuvB hexamer is contacted by two RuvA subunits (via domain III) on 2 adjacent RuvB subunits; this complex drives branch migration. In the full resolvosome a probable DNA-RuvA(4)-RuvB(12)-RuvC(2) complex forms which resolves the HJ.

The protein localises to the cytoplasm. It catalyses the reaction ATP + H2O = ADP + phosphate + H(+). In terms of biological role, the RuvA-RuvB-RuvC complex processes Holliday junction (HJ) DNA during genetic recombination and DNA repair, while the RuvA-RuvB complex plays an important role in the rescue of blocked DNA replication forks via replication fork reversal (RFR). RuvA specifically binds to HJ cruciform DNA, conferring on it an open structure. The RuvB hexamer acts as an ATP-dependent pump, pulling dsDNA into and through the RuvAB complex. RuvB forms 2 homohexamers on either side of HJ DNA bound by 1 or 2 RuvA tetramers; 4 subunits per hexamer contact DNA at a time. Coordinated motions by a converter formed by DNA-disengaged RuvB subunits stimulates ATP hydrolysis and nucleotide exchange. Immobilization of the converter enables RuvB to convert the ATP-contained energy into a lever motion, pulling 2 nucleotides of DNA out of the RuvA tetramer per ATP hydrolyzed, thus driving DNA branch migration. The RuvB motors rotate together with the DNA substrate, which together with the progressing nucleotide cycle form the mechanistic basis for DNA recombination by continuous HJ branch migration. Branch migration allows RuvC to scan DNA until it finds its consensus sequence, where it cleaves and resolves cruciform DNA. The sequence is that of Holliday junction branch migration complex subunit RuvB from Salinispora arenicola (strain CNS-205).